A 438-amino-acid chain; its full sequence is L-cysteine:1D-myo-inositol 2-amino-2-deoxy-alpha-D-glucopyranoside ligase (438 aa).

The tract at residues 1–27 is disordered; sequence MDSWTSPDVPALPFTAEGPRVHDTARG. Cys45 is a binding site for Zn(2+). Residues 45–48, Thr60, and 83–85 contribute to the L-cysteinyl-5'-AMP site; these read CGIT and NVT. Positions 47–57 match the 'HIGH' region motif; sequence ITPYDATHLGH. The short motif at 197–202 is the 'ERGGDP' region element; that stretch reads DRGGDP. Trp238 serves as a coordination point for L-cysteinyl-5'-AMP. Zn(2+) is bound at residue Cys242. 260–262 contributes to the L-cysteinyl-5'-AMP binding site; sequence GDD. Residue His267 participates in Zn(2+) binding. Val293 contacts L-cysteinyl-5'-AMP. The short motif at 299-303 is the 'KMSKS' region element; the sequence is KMSKS.

The protein belongs to the class-I aminoacyl-tRNA synthetase family. MshC subfamily. As to quaternary structure, monomer. It depends on Zn(2+) as a cofactor.

The enzyme catalyses 1D-myo-inositol 2-amino-2-deoxy-alpha-D-glucopyranoside + L-cysteine + ATP = 1D-myo-inositol 2-(L-cysteinylamino)-2-deoxy-alpha-D-glucopyranoside + AMP + diphosphate + H(+). Catalyzes the ATP-dependent condensation of GlcN-Ins and L-cysteine to form L-Cys-GlcN-Ins. In Kytococcus sedentarius (strain ATCC 14392 / DSM 20547 / JCM 11482 / CCUG 33030 / NBRC 15357 / NCTC 11040 / CCM 314 / 541) (Micrococcus sedentarius), this protein is L-cysteine:1D-myo-inositol 2-amino-2-deoxy-alpha-D-glucopyranoside ligase.